The chain runs to 249 residues: Ribonucleoprotein 1 (249 aa).

RRM domains are found at residues 35 to 114 (RTLY…NILT) and 140 to 231 (NTLY…IASA).

The sequence is that of Ribonucleoprotein 1 (RNP1) from Saccharomyces cerevisiae (strain ATCC 204508 / S288c) (Baker's yeast).